We begin with the raw amino-acid sequence, 603 residues long: uncharacterized protein (603 aa).

A Ubiquitin-like domain is found at tyrosine 4 to phenylalanine 79. 3 disordered regions span residues threonine 85–leucine 121, serine 159–serine 178, and alanine 206–phenylalanine 348. Polar residues-rich tracts occupy residues valine 94–asparagine 117 and threonine 162–serine 178. The segment covering serine 219–proline 231 has biased composition (low complexity). Positions leucine 246–leucine 264 are enriched in polar residues. Residues serine 280–serine 289 are compositionally biased toward low complexity. Polar residues predominate over residues isoleucine 290 to glycine 314. A compositionally biased stretch (low complexity) spans proline 315 to proline 329. Polar residues predominate over residues alanine 330 to phenylalanine 348. A helical membrane pass occupies residues isoleucine 496–phenylalanine 516. The tract at residues threonine 544–leucine 578 is disordered. A Phosphothreonine modification is found at threonine 566. Basic and acidic residues predominate over residues asparagine 569 to leucine 578.

Its subcellular location is the endoplasmic reticulum membrane. This is an uncharacterized protein from Schizosaccharomyces pombe (strain 972 / ATCC 24843) (Fission yeast).